A 314-amino-acid chain; its full sequence is BTB/POZ domain-containing adapter for CUL3-mediated RhoA degradation protein 2 (314 aa).

The region spanning Lys32–Lys100 is the BTB domain.

Belongs to the BACURD family. Component of the BCR(TNFAIP1) E3 ubiquitin ligase complex, at least composed of CUL3, TNFAIP1/BACURD2 and RBX1.

The protein resides in the cytoplasm. Its subcellular location is the nucleus. It localises to the endosome. It participates in protein modification; protein ubiquitination. In terms of biological role, substrate-specific adapter of a BCR (BTB-CUL3-RBX1) E3 ubiquitin-protein ligase complex involved in regulation of cytoskeleton structure. The BCR(TNFAIP1) E3 ubiquitin ligase complex mediates the ubiquitination of target proteins, leading to their degradation by the proteasome. The polypeptide is BTB/POZ domain-containing adapter for CUL3-mediated RhoA degradation protein 2 (TNFAIP1) (Gallus gallus (Chicken)).